The primary structure comprises 628 residues: Basal cell adhesion molecule (628 aa).

Residues 1 to 31 form the signal peptide; the sequence is MEPPDARAGARRAPRLLVLALLLAAPPGSKA. Ig-like V-type domains are found at residues 32–142 and 150–253; these read EVRL…ARLK and PEVS…RLDG. Residues 32–547 lie on the Extracellular side of the membrane; the sequence is EVRLSVPPLV…GTVAPQTSQA (516 aa). 3 disulfides stabilise this stretch: Cys53–Cys125, Cys172–Cys237, and Cys291–Cys337. 3 consecutive Ig-like C2-type domains span residues 254–355, 355–441, and 448–538; these read PSFS…KTLE, ELRV…RSFR, and PELK…FHFG. N-linked (GlcNAc...) asparagine glycosylation is found at Asn321, Asn330, and Asn378. Intrachain disulfides connect Cys384–Cys424 and Cys473–Cys522. A helical membrane pass occupies residues 548-568; sequence GVAVMAVAISVALLLLVVAVF. The Cytoplasmic portion of the chain corresponds to 569–628; the sequence is YCMRRKGRPGCCQWGEKGSPPPGEPKLSHSGSQRPEQTGLLMGSASGGAKHGSGGFGDEC. Residues 580–628 are disordered; it reads CQWGEKGSPPPGEPKLSHSGSQRPEQTGLLMGSASGGAKHGSGGFGDEC. Ser596, Ser598, Ser600, and Ser621 each carry phosphoserine. Residues 613 to 628 show a composition bias toward gly residues; sequence ASGGAKHGSGGFGDEC.

In terms of assembly, homodimer. Interacts with ITGA4:ITGB1. Interacts with spectrins SPTA1 and SPTB1. Post-translationally, epinephrine-stimulated phosphorylation of Ser-621 by PKA enhances adhesion to laminin. Ser-621 can also be phosphorylated by AKT1.

Its subcellular location is the cell membrane. In terms of biological role, transmembrane glycoprotein that functions as both a receptor and an adhesion molecule playing a crucial role in cell adhesion, motility, migration and invasion. Extracellular domain enables binding to extracellular matrix proteins, such as laminin, integrin and other ligands while its intracellular domain interacts with cytoskeletal proteins like hemoglobin, facilitating cell signal transduction. Serves as a receptor for laminin alpha-5/LAMA5 to promote cell adhesion. Mechanistically, JAK2 induces BCAM phosphorylation and activates its adhesion to laminin by stimulating a Rap1/AKT signaling pathway in the absence of EPOR. In Bos taurus (Bovine), this protein is Basal cell adhesion molecule (BCAM).